A 2824-amino-acid chain; its full sequence is Highly reducing polyketide synthase stpks1 (2824 aa).

Residues 8 to 428 form the Ketosynthase family 3 (KS3) domain; that stretch reads PKPVAVVGIS…GANGHVIAES (421 aa). Residues C177, H312, and H348 each act as for beta-ketoacyl synthase activity in the active site. A malonyl-CoA:ACP transacylase (MAT) domain region spans residues 517–854; that stretch reads QLVFVFSGQG…LTAVGNLSTL (338 aa). Residue S616 is the For malonyltransferase activity of the active site. Residues 886–1004 are N-terminal hotdog fold; that stretch reads MPFYSESSEL…GFMTTEVMDK (119 aa). The PKS/mFAS DH domain occupies 886 to 1168; it reads MPFYSESSEL…SKHWTGAVPT (283 aa). Residues 894–1083 are dehydratase (DH) domain; the sequence is ELAVKMKRSR…PSLLDSCIHG (190 aa). The active-site Proton acceptor; for dehydratase activity is the H925. The tract at residues 1018–1168 is C-terminal hotdog fold; that stretch reads TTPADISNLY…SKHWTGAVPT (151 aa). D1078 (proton donor; for dehydratase activity) is an active-site residue. Residues 1101–1449 form a methyltransferase (CMet) domain region; the sequence is PSHIGRVTLY…KFQVVDGAQD (349 aa). Positions 1213–1232 are disordered; the sequence is APPSANGHANGHANGSANGS. An enoyl reductase (ER) domain region spans residues 1518–1840; the sequence is TGTFDGAVAT…LPSDFSVSQS (323 aa). Positions 1842-2096 are ketoreductase (KR) domain; sequence ALADDKTYLV…SESVLYNHLV (255 aa). Residues 2109-2196 enclose the Carrier domain; it reads DPYEVLQEIV…TAVSTAEKPF (88 aa). The interval 2200–2414 is thioesterase (TE) domain; that stretch reads AMHQPGQTIL…WASSDATTRM (215 aa). The tract at residues 2608 to 2809 is methyltransferase (CMet) domain; sequence YRQNKVFTSM…ATGYSNVQVC (202 aa).

It participates in mycotoxin biosynthesis. Functionally, highly reducing polyketide synthase; part of the gene cluster that mediates the biosynthesis of strobilurin A, an antifungal polyketide that contains a key beta-methoxyacrylate toxophore that targets the complex III of the mitochondrial electron transport chain. Strobilurin biosynthesis begins with construction of benzoyl CoA by step-wise elimination of ammonia from phenylalanine by the phenylalanine ammonia-lyase str11, oxygenation by str8 and retro-Claisen reaction to form benzoic acid, which is activated to its CoA thiolester benzoyl CoA by the dedicated CoA ligase str10. Benzoyl CoA forms the starter unit for the highly reducing polyketide synthase stpks1 that produces the polyketide prestrobilutin A. The FAD-dependent oxygenase str9 then catalyzes the key oxidative rearrangement responsible for the creation of the beta-methoxyacrylate toxophore. Str9 performs epoxidation of the 2,3 olefin of prestrobilutin A, followed by Meinwald rearrangement to furnish the aldehyde intermediate. Rapid enolization of the aldehyde intermediate would give the beta-methoxyacrylate skeleton and methylations catalyzed by str2 and str3 complete the synthesis and lead to the production of strobilurin A. The short-chain dehydrogenase stl2 and the dehydrogenase str4 play a role in the shunt pathway leading to the production of bolineol. The cluster encodes no obvious halogenase gene that could be involved in production of strobilurin B, nor any obvious dimethylallyl-transferase that could be involved in the production of strobilurin G. It is possible that unknown proteins encoded in, or near, the cluster (such as str1 or stl1) may form new classes of halogenases or dimethylally-transferases, or that the responsible genes are located elsewhere on the genome. Similarly, proteins encoded by str5/str6 hydrolases appear to have no chemical role in the biosynthesis of strobilurin A. Finally, no obvious self-resistance gene is found within the cluster. This chain is Highly reducing polyketide synthase stpks1, found in Strobilurus tenacellus.